The chain runs to 647 residues: Exoribonuclease 2 (647 aa).

One can recognise an RNB domain in the interval 191–517; that stretch reads REDLCALPFV…VNHRLLKALI (327 aa). The region spanning 563-645 is the S1 motif domain; it reads PTPFNAEIID…DTRSLIARPF (83 aa).

It belongs to the RNR ribonuclease family. RNase II subfamily.

The protein resides in the cytoplasm. The enzyme catalyses Exonucleolytic cleavage in the 3'- to 5'-direction to yield nucleoside 5'-phosphates.. Functionally, involved in mRNA degradation. Hydrolyzes single-stranded polyribonucleotides processively in the 3' to 5' direction. The protein is Exoribonuclease 2 of Edwardsiella piscicida.